Reading from the N-terminus, the 382-residue chain is ATP phosphoribosyltransferase regulatory subunit (382 aa).

This sequence belongs to the class-II aminoacyl-tRNA synthetase family. HisZ subfamily. As to quaternary structure, heteromultimer composed of HisG and HisZ subunits.

It is found in the cytoplasm. Its pathway is amino-acid biosynthesis; L-histidine biosynthesis; L-histidine from 5-phospho-alpha-D-ribose 1-diphosphate: step 1/9. Functionally, required for the first step of histidine biosynthesis. May allow the feedback regulation of ATP phosphoribosyltransferase activity by histidine. The protein is ATP phosphoribosyltransferase regulatory subunit of Burkholderia thailandensis (strain ATCC 700388 / DSM 13276 / CCUG 48851 / CIP 106301 / E264).